Here is a 107-residue protein sequence, read N- to C-terminus: UPF0145 protein Memar_1285 (107 aa).

It belongs to the UPF0145 family.

This chain is UPF0145 protein Memar_1285, found in Methanoculleus marisnigri (strain ATCC 35101 / DSM 1498 / JR1).